Consider the following 212-residue polypeptide: Ribosomal RNA large subunit methyltransferase E (212 aa).

Positions 1-10 (MATCRRRRRG) are enriched in basic residues. Positions 1–24 (MATCRRRRRGCNSQARRSRHESDP) are disordered. Residues Gly66, Trp68, Asp86, Asp102, and Asp127 each contribute to the S-adenosyl-L-methionine site. The Proton acceptor role is filled by Lys167.

Belongs to the class I-like SAM-binding methyltransferase superfamily. RNA methyltransferase RlmE family.

The protein localises to the cytoplasm. It catalyses the reaction uridine(2552) in 23S rRNA + S-adenosyl-L-methionine = 2'-O-methyluridine(2552) in 23S rRNA + S-adenosyl-L-homocysteine + H(+). Its function is as follows. Specifically methylates the uridine in position 2552 of 23S rRNA at the 2'-O position of the ribose in the fully assembled 50S ribosomal subunit. The protein is Ribosomal RNA large subunit methyltransferase E of Halorhodospira halophila (strain DSM 244 / SL1) (Ectothiorhodospira halophila (strain DSM 244 / SL1)).